Consider the following 70-residue polypeptide: Small ribosomal subunit protein bS21 (70 aa).

The tract at residues K40–Y70 is disordered. The segment covering R45–R61 has biased composition (basic residues).

It belongs to the bacterial ribosomal protein bS21 family.

The sequence is that of Small ribosomal subunit protein bS21 from Bordetella parapertussis (strain 12822 / ATCC BAA-587 / NCTC 13253).